The primary structure comprises 154 residues: Lipoprotein signal peptidase (154 aa).

4 helical membrane-spanning segments follow: residues 8 to 28 (AFFL…YWAL), 36 to 56 (IVVN…AFSF), 66 to 86 (WLFA…LLTK), and 88 to 108 (HHWL…GNLY). Residues Asp118 and Asp136 contribute to the active site. A helical transmembrane segment spans residues 129–149 (WPVFNLADVAITLGVILMLIA).

This sequence belongs to the peptidase A8 family.

Its subcellular location is the cell inner membrane. The catalysed reaction is Release of signal peptides from bacterial membrane prolipoproteins. Hydrolyzes -Xaa-Yaa-Zaa-|-(S,diacylglyceryl)Cys-, in which Xaa is hydrophobic (preferably Leu), and Yaa (Ala or Ser) and Zaa (Gly or Ala) have small, neutral side chains.. It functions in the pathway protein modification; lipoprotein biosynthesis (signal peptide cleavage). Its function is as follows. This protein specifically catalyzes the removal of signal peptides from prolipoproteins. The protein is Lipoprotein signal peptidase of Dichelobacter nodosus (strain VCS1703A).